The sequence spans 347 residues: Fc receptor-like A (347 aa).

The first 27 residues, M1–A27, serve as a signal peptide directing secretion. Ig-like C2-type domains lie at P77–S166 and P179–S257. Disulfide bonds link C106–C150 and C199–C247. A disordered region spans residues K272–D296. Pro residues predominate over residues P276–P292.

In terms of assembly, monomer or homodimer; disulfide-linked.

Its subcellular location is the cytoplasm. Its function is as follows. May be implicated in B-cell differentiation and lymphomagenesis. This chain is Fc receptor-like A (Fcrla), found in Rattus norvegicus (Rat).